Here is a 277-residue protein sequence, read N- to C-terminus: MSLLEAVILGLVQGITEFLPISSSAHLILVQALFGMTFAGFSFEILLHLASVLAVILYYRHDLIEIIRGFFAYFTKRTPQNKAMFWFAIYLVVATGITGVAGILFEDYISETFKAPIFIALALAVTGLFLIIIERFVRHGNRTEKEMTIWDSIIVGLGQCLALIPGLSRSGTTLIVGMFAGLTKETAVRFSFLLSIPVILGSSVLAIDDLISGDLLASTGLFELAASFVVTFIASWLGIVFFLNLVRKSKLVYFAVYCFIVAILVFIFQDALGHADI.

A run of 8 helical transmembrane segments spans residues 1-21, 39-58, 85-105, 113-133, 147-167, 191-211, 226-246, and 251-271; these read MSLL…FLPI, AGFS…VILY, FWFA…GILF, FKAP…LIII, MTIW…IPGL, SFLL…DDLI, ASFV…LNLV, and LVYF…FQDA.

This sequence belongs to the UppP family.

It is found in the cell membrane. It catalyses the reaction di-trans,octa-cis-undecaprenyl diphosphate + H2O = di-trans,octa-cis-undecaprenyl phosphate + phosphate + H(+). Its function is as follows. Catalyzes the dephosphorylation of undecaprenyl diphosphate (UPP). Confers resistance to bacitracin. The chain is Undecaprenyl-diphosphatase 1 from Shouchella clausii (strain KSM-K16) (Alkalihalobacillus clausii).